The chain runs to 145 residues: Transcription antitermination protein NusB (145 aa).

The protein belongs to the NusB family.

In terms of biological role, involved in transcription antitermination. Required for transcription of ribosomal RNA (rRNA) genes. Binds specifically to the boxA antiterminator sequence of the ribosomal RNA (rrn) operons. This Geotalea daltonii (strain DSM 22248 / JCM 15807 / FRC-32) (Geobacter daltonii) protein is Transcription antitermination protein NusB.